The following is a 191-amino-acid chain: Ribonuclease HII (191 aa).

The 185-residue stretch at 7–191 (ILMAGVDEVG…YSPVADLISK (185 aa)) folds into the RNase H type-2 domain. Residues aspartate 13, glutamate 14, and aspartate 103 each contribute to the a divalent metal cation site.

It belongs to the RNase HII family. The cofactor is Mn(2+). Requires Mg(2+) as cofactor.

It is found in the cytoplasm. The enzyme catalyses Endonucleolytic cleavage to 5'-phosphomonoester.. In terms of biological role, endonuclease that specifically degrades the RNA of RNA-DNA hybrids. In Legionella pneumophila (strain Corby), this protein is Ribonuclease HII.